Consider the following 1099-residue polypeptide: Zinc finger protein basonuclin-2 (1099 aa).

The disordered stretch occupies residues 45–66 (EEAEVDVRERETQRDREPKRAR). Residues 49–66 (VDVRERETQRDREPKRAR) show a composition bias toward basic and acidic residues. K277 is covalently cross-linked (Glycyl lysine isopeptide (Lys-Gly) (interchain with G-Cter in SUMO2)). The interval 357 to 385 (LSTQNEYNESSESEVSPTPYKNDQTPNRN) is disordered. Low complexity predominate over residues 361 to 372 (NEYNESSESEVS). The segment covering 375–385 (PYKNDQTPNRN) has biased composition (polar residues). Glycyl lysine isopeptide (Lys-Gly) (interchain with G-Cter in SUMO2) cross-links involve residues K396, K416, and K421. The segment at 397 to 423 (TEPACVSPIQNSAPVSDLTKTEHPKSS) is disordered. A C2H2-type 1 zinc finger spans residues 441–464 (VFCNACGKTFYDKGTLKIHYNAVH). Position 561 is a phosphoserine (S561). Disordered regions lie at residues 622 to 641 (EPSA…MPVK) and 648 to 742 (DTAD…EGDE). K641 participates in a covalent cross-link: Glycyl lysine isopeptide (Lys-Gly) (interchain with G-Cter in SUMO2). The span at 648 to 661 (DTADEFDDEDDDPN) shows a compositional bias: acidic residues. 2 stretches are compositionally biased toward basic and acidic residues: residues 670–680 (MSHDNHCHSQE) and 719–742 (ERDY…EGDE). The C2H2-type 2 zinc finger occupies 833-856 (KICYVCKKSFKSSYSVKLHYRNVH). Residues K894 and K919 each participate in a glycyl lysine isopeptide (Lys-Gly) (interchain with G-Cter in SUMO2) cross-link. Disordered regions lie at residues 929 to 948 (LDVR…HLNG) and 968 to 1008 (LQSS…KAEA). Acidic residues predominate over residues 982–995 (AGSDEGILLDDIDG). 2 consecutive C2H2-type zinc fingers follow at residues 1035–1058 (IMCN…KTVH) and 1063–1090 (HKCK…PNLH). Residues 1079 to 1099 (SRNRHSQNPNLHKNIPFTSVD) form a disordered region.

As to expression, highly expressed in testis, uterus and small intestine, and weakly expressed in colon and prostate. Also expressed in skin, primary keratinocytes, immortalized keratinocytes, and HeLa and HEK293 cells. Not detected in blood, thymus, spleen or Hep-G2 cells.

It localises to the nucleus. Functionally, probable transcription factor specific for skin keratinocytes. May play a role in the differentiation of spermatozoa and oocytes. May also play an important role in early urinary-tract development. The polypeptide is Zinc finger protein basonuclin-2 (Homo sapiens (Human)).